The following is a 496-amino-acid chain: Ribose import ATP-binding protein RbsA (496 aa).

2 consecutive ABC transporter domains span residues 5–241 and 252–496; these read LQMK…VGRE and SPGE…VGGE. 37 to 44 is an ATP binding site; that stretch reads GENGAGKS.

The protein belongs to the ABC transporter superfamily. Ribose importer (TC 3.A.1.2.1) family. The complex is composed of an ATP-binding protein (RbsA), two transmembrane proteins (RbsC) and a solute-binding protein (RbsB).

It localises to the cell membrane. It carries out the reaction D-ribose(out) + ATP + H2O = D-ribose(in) + ADP + phosphate + H(+). In terms of biological role, part of the ABC transporter complex RbsABC involved in ribose import. Responsible for energy coupling to the transport system. The chain is Ribose import ATP-binding protein RbsA from Caldanaerobacter subterraneus subsp. tengcongensis (strain DSM 15242 / JCM 11007 / NBRC 100824 / MB4) (Thermoanaerobacter tengcongensis).